We begin with the raw amino-acid sequence, 150 residues long: Small ribosomal subunit protein uS11y (150 aa).

A Phosphoserine modification is found at S19.

This sequence belongs to the universal ribosomal protein uS11 family.

It is found in the cytoplasm. The sequence is that of Small ribosomal subunit protein uS11y (RPS14B) from Arabidopsis thaliana (Mouse-ear cress).